A 266-amino-acid chain; its full sequence is MMKTLSSGNCTLNVPAKNSYRMVVLGASRVGKSSIVSRFLNGRFEDQYTPTIEDFHRKVYNIHGDMYQLDILDTSGNHPFPAMRRLSILTGDVFILVFSLDSRESFDEVKRLQKQILEVKSCLKNKTKEAAELPMVICGNKNDHSELCRQVPAMEAELLVSGDENCAYFEVSAKKNTNVNEMFYVLFSMAKLPHEMSPALHHKISVQYGDAFHPRPFCMRRTKVAGAYGMVSPFARRPSVNSDLKYIKAKVLREGQARERDKCSIQ.

Residue 26–33 (GASRVGKS) participates in GTP binding. The short motif at 48 to 56 (YTPTIEDFH) is the Effector region element. Residues 73–77 (DTSGN) and 140–143 (NKND) each bind GTP. The segment at 189 to 235 (MAKLPHEMSPALHHKISVQYGDAFHPRPFCMRRTKVAGAYGMVSPFA) is interaction with GNB1, GNB2 and GNB3. Cysteine 263 is modified (cysteine methyl ester). A lipid anchor (S-farnesyl cysteine) is attached at cysteine 263. The propeptide at 264–266 (SIQ) is removed in mature form.

It belongs to the small GTPase superfamily. RasD family. In terms of assembly, monomer (Potential). Interacts with PIK3CA and UBE2I. Interacts with GNB1, GNB2 and GNB3. Farnesylated. Farnesylation is required for membrane targeting. In terms of tissue distribution, highly expressed in brain; prominently in the striatum and weakly in kidney, thyroid, lung, heart and testis. Not expressed in liver. Expressed in pancreatic cell lines and in a embryonic stem cell line.

Its subcellular location is the cell membrane. In terms of biological role, GTPase signaling protein that binds to and hydrolyzes GTP. Regulates signaling pathways involving G-proteins-coupled receptor and heterotrimeric proteins such as GNB1, GNB2 and GNB3. May be involved in selected striatal competencies, mainly locomotor activity and motor coordination. The chain is GTP-binding protein Rhes (Rasd2) from Mus musculus (Mouse).